A 366-amino-acid polypeptide reads, in one-letter code: Aminomethyltransferase (366 aa).

Belongs to the GcvT family. The glycine cleavage system is composed of four proteins: P, T, L and H.

It catalyses the reaction N(6)-[(R)-S(8)-aminomethyldihydrolipoyl]-L-lysyl-[protein] + (6S)-5,6,7,8-tetrahydrofolate = N(6)-[(R)-dihydrolipoyl]-L-lysyl-[protein] + (6R)-5,10-methylene-5,6,7,8-tetrahydrofolate + NH4(+). In terms of biological role, the glycine cleavage system catalyzes the degradation of glycine. This is Aminomethyltransferase from Bacillus cereus (strain G9842).